Consider the following 477-residue polypeptide: Prolyl tri/tetrapeptidyl aminopeptidase (477 aa).

The first 27 residues, 1-27, serve as a signal peptide directing secretion; that stretch reads MRKALRSLLAASMLIGAIGAGSATAEA. Positions 28-33 are excised as a propeptide; it reads ASITAP. A disordered region spans residues 448–477; sequence QKDEKAAKPLAPFDAKLDRVKNDKQSALRP. Residues 462–477 are compositionally biased toward basic and acidic residues; the sequence is AKLDRVKNDKQSALRP.

Belongs to the peptidase S37 family.

The protein resides in the secreted. It localises to the cell surface. Its activity is regulated as follows. Completely inhibited by the serine protease inhibitor phenylmethylsulfonyl fluoride. Partially inhibited by the serine protease inhibitor Pefabloc. Not inhibited by cysteine proteinase-specific or metalloproteinase-specific inhibitors. Not inhibited by prolinal or its derivatives. EDTA and EGTA both partially inhibit this enzyme. EDTA has no effect on activity. Its function is as follows. Has proline-specific tripeptidyl aminopeptidase and tetrapeptidyl aminopeptidase activity. Activity is highest against tripeptides containing an Ala-Pro motif. Involved in the final processing of transglutaminase, by removing either the tetrapeptide Phe-Arg-Ala-Pro left after TAMEP or SAM-P45 hydrolysis, or the tripeptide Arg-Ala-Pro left after SGMP II hydrolysis in a single step. The chain is Prolyl tri/tetrapeptidyl aminopeptidase (ptp) from Streptomyces mobaraensis (Streptoverticillium mobaraense).